The chain runs to 195 residues: MDLKVFDGQEKSELSMIEVAHAILAYHNEAMAFADLTNEIQQYLGKSDEEIRERLSQFYTDLNVDGSFISLGDNTWGLRAWYPYESIDEATVGETEDEEDRPKKRRRKVNAFLAGTDDDDDVIDYDNDDPEDEDLDDDQGPDDDDDYEEDDYDEDNPVEDDDEETNIEDQLSELHGDEFGDDEEEDEEDKEDDEE.

The region spanning 14–81 (LSMIEVAHAI…GDNTWGLRAW (68 aa)) is the HTH HARE-type domain. The interval 91–195 (TVGETEDEED…DEEDKEDDEE (105 aa)) is disordered. Acidic residues-rich tracts occupy residues 116 to 171 (TDDD…EDQL) and 179 to 195 (FGDD…DDEE).

Belongs to the RpoE family. In terms of assembly, RNAP is composed of a core of 2 alpha, a beta and a beta' subunits. The core is associated with a delta subunit and one of several sigma factors.

Functionally, participates in both the initiation and recycling phases of transcription. In the presence of the delta subunit, RNAP displays an increased specificity of transcription, a decreased affinity for nucleic acids, and an increased efficiency of RNA synthesis because of enhanced recycling. The polypeptide is Probable DNA-directed RNA polymerase subunit delta (Limosilactobacillus fermentum (strain NBRC 3956 / LMG 18251) (Lactobacillus fermentum)).